The chain runs to 334 residues: Putative carboxypeptidase VC_A0337 (334 aa).

S112 serves as the catalytic Nucleophile. Active-site charge relay system residues include E234 and H302.

It belongs to the peptidase S66 family.

The chain is Putative carboxypeptidase VC_A0337 from Vibrio cholerae serotype O1 (strain ATCC 39315 / El Tor Inaba N16961).